We begin with the raw amino-acid sequence, 277 residues long: 2-dehydro-3-deoxyphosphooctonate aldolase (277 aa).

The protein belongs to the KdsA family.

It localises to the cytoplasm. It carries out the reaction D-arabinose 5-phosphate + phosphoenolpyruvate + H2O = 3-deoxy-alpha-D-manno-2-octulosonate-8-phosphate + phosphate. The protein operates within carbohydrate biosynthesis; 3-deoxy-D-manno-octulosonate biosynthesis; 3-deoxy-D-manno-octulosonate from D-ribulose 5-phosphate: step 2/3. It participates in bacterial outer membrane biogenesis; lipopolysaccharide biosynthesis. This is 2-dehydro-3-deoxyphosphooctonate aldolase from Vesicomyosocius okutanii subsp. Calyptogena okutanii (strain HA).